The sequence spans 500 residues: L-arabinose isomerase (500 aa).

Glu306, Glu333, His349, and His448 together coordinate Mn(2+).

The protein belongs to the arabinose isomerase family. Requires Mn(2+) as cofactor.

It catalyses the reaction beta-L-arabinopyranose = L-ribulose. It functions in the pathway carbohydrate degradation; L-arabinose degradation via L-ribulose; D-xylulose 5-phosphate from L-arabinose (bacterial route): step 1/3. In terms of biological role, catalyzes the conversion of L-arabinose to L-ribulose. The protein is L-arabinose isomerase of Shewanella sp. (strain MR-7).